Reading from the N-terminus, the 263-residue chain is Pimeloyl-[acyl-carrier protein] methyl ester esterase (263 aa).

Substrate is bound by residues tryptophan 23, serine 90–leucine 91, and phenylalanine 152–glutamine 156. Serine 90 acts as the Nucleophile in catalysis. Catalysis depends on residues aspartate 216 and histidine 244. Histidine 244 provides a ligand contact to substrate.

This sequence belongs to the AB hydrolase superfamily. Carboxylesterase BioH family. Monomer.

It localises to the cytoplasm. It catalyses the reaction 6-carboxyhexanoyl-[ACP] methyl ester + H2O = 6-carboxyhexanoyl-[ACP] + methanol + H(+). It functions in the pathway cofactor biosynthesis; biotin biosynthesis. In terms of biological role, the physiological role of BioH is to remove the methyl group introduced by BioC when the pimeloyl moiety is complete. It allows to synthesize pimeloyl-ACP via the fatty acid synthetic pathway through the hydrolysis of the ester bonds of pimeloyl-ACP esters. The polypeptide is Pimeloyl-[acyl-carrier protein] methyl ester esterase (Nitrosospira multiformis (strain ATCC 25196 / NCIMB 11849 / C 71)).